We begin with the raw amino-acid sequence, 193 residues long: ER membrane protein complex subunit 4 (193 aa).

2 helical membrane-spanning segments follow: residues 91–111 (ILAY…TLML) and 137–157 (LWPA…IGVY).

This sequence belongs to the EMC4 family.

The protein resides in the endoplasmic reticulum membrane. The protein is ER membrane protein complex subunit 4 of Schizosaccharomyces pombe (strain 972 / ATCC 24843) (Fission yeast).